Here is a 278-residue protein sequence, read N- to C-terminus: Tryptophan synthase alpha chain (278 aa).

Catalysis depends on proton acceptor residues Glu-50 and Asp-61.

The protein belongs to the TrpA family. In terms of assembly, tetramer of two alpha and two beta chains.

The enzyme catalyses (1S,2R)-1-C-(indol-3-yl)glycerol 3-phosphate + L-serine = D-glyceraldehyde 3-phosphate + L-tryptophan + H2O. Its pathway is amino-acid biosynthesis; L-tryptophan biosynthesis; L-tryptophan from chorismate: step 5/5. In terms of biological role, the alpha subunit is responsible for the aldol cleavage of indoleglycerol phosphate to indole and glyceraldehyde 3-phosphate. This Rhodopseudomonas palustris (strain ATCC BAA-98 / CGA009) protein is Tryptophan synthase alpha chain.